A 571-amino-acid polypeptide reads, in one-letter code: Proline--tRNA ligase (571 aa).

The protein belongs to the class-II aminoacyl-tRNA synthetase family. ProS type 1 subfamily. In terms of assembly, homodimer.

It localises to the cytoplasm. It carries out the reaction tRNA(Pro) + L-proline + ATP = L-prolyl-tRNA(Pro) + AMP + diphosphate. Catalyzes the attachment of proline to tRNA(Pro) in a two-step reaction: proline is first activated by ATP to form Pro-AMP and then transferred to the acceptor end of tRNA(Pro). As ProRS can inadvertently accommodate and process non-cognate amino acids such as alanine and cysteine, to avoid such errors it has two additional distinct editing activities against alanine. One activity is designated as 'pretransfer' editing and involves the tRNA(Pro)-independent hydrolysis of activated Ala-AMP. The other activity is designated 'posttransfer' editing and involves deacylation of mischarged Ala-tRNA(Pro). The misacylated Cys-tRNA(Pro) is not edited by ProRS. The protein is Proline--tRNA ligase of Shewanella baltica (strain OS155 / ATCC BAA-1091).